The following is a 173-amino-acid chain: MKVYKDLYSNDEVCSDAYDHHDPFDNADLSSVAFEVKTSKVPKGEEDYGIGYNDEEGADQMNVDPNVEMVVDVVDKFGLQSLSLTKKDYSSYIRKYIQRLVATLQEKNPERVEPFKTTVSDFVKHVLANFEDFEFYVGESLDYEAGLVYAYYKGEEVSPRLVFLKDGLVEERY.

A TCTP domain is found at 1–173 (MKVYKDLYSN…LKDGLVEERY (173 aa)).

This sequence belongs to the TCTP family.

The protein resides in the cytoplasm. Its function is as follows. Involved in calcium binding and microtubule stabilization. This chain is Translationally-controlled tumor protein homolog (TCTP), found in Theileria parva (East coast fever infection agent).